Here is a 42-residue protein sequence, read N- to C-terminus: Potassium channel toxin gamma-KTx 1.3 (42 aa).

Cystine bridges form between C5–C23, C11–C34, C20–C39, and C24–C41.

Belongs to the ergtoxin family. Gamma-KTx 1 subfamily. Expressed by the venom gland.

The protein localises to the secreted. Functionally, blocks Kv11/ERG potassium channels. This chain is Potassium channel toxin gamma-KTx 1.3, found in Centruroides gracilis (Slenderbrown scorpion).